The primary structure comprises 63 residues: Large ribosomal subunit protein bL28 (63 aa).

Belongs to the bacterial ribosomal protein bL28 family.

In Geobacter metallireducens (strain ATCC 53774 / DSM 7210 / GS-15), this protein is Large ribosomal subunit protein bL28.